Consider the following 350-residue polypeptide: tRNA uridine(34) hydroxylase (350 aa).

A Rhodanese domain is found at 146 to 240 (DDPDAVFIDM…YARRAREQGL (95 aa)). C200 functions as the Cysteine persulfide intermediate in the catalytic mechanism. Residues 319–328 (RRRRAGRENG) show a composition bias toward basic and acidic residues. The disordered stretch occupies residues 319–350 (RRRRAGRENGNKIFNKSRGRLNSKLSIPDPAE).

Belongs to the TrhO family.

It carries out the reaction uridine(34) in tRNA + AH2 + O2 = 5-hydroxyuridine(34) in tRNA + A + H2O. Its function is as follows. Catalyzes oxygen-dependent 5-hydroxyuridine (ho5U) modification at position 34 in tRNAs. This is tRNA uridine(34) hydroxylase from Salmonella heidelberg (strain SL476).